Reading from the N-terminus, the 559-residue chain is Mercuric reductase (559 aa).

Positions 1–64 constitute an HMA domain; that stretch reads MYLNITGMTC…AVAGLGYKAT (64 aa). A metal cation contacts are provided by cysteine 10 and cysteine 13. FAD-binding residues include alanine 108, glycine 128, and threonine 133. A disulfide bridge connects residues cysteine 134 and cysteine 139. Lysine 143, alanine 209, aspartate 401, and valine 409 together coordinate FAD. Residues cysteine 556 and cysteine 557 each contribute to the Hg(2+) site.

It belongs to the class-I pyridine nucleotide-disulfide oxidoreductase family. In terms of assembly, homodimer. FAD serves as cofactor.

It catalyses the reaction Hg + NADP(+) + H(+) = Hg(2+) + NADPH. Resistance to Hg(2+) in bacteria appears to be governed by a specialized system which includes mercuric reductase. MerA protein is responsible for volatilizing mercury as Hg(0). The chain is Mercuric reductase (merA) from Alcaligenes sp.